We begin with the raw amino-acid sequence, 477 residues long: Pup--protein ligase (477 aa).

A Mg(2+)-binding site is contributed by glutamate 16. An ATP-binding site is contributed by arginine 60. Residue tyrosine 62 coordinates Mg(2+). Residue aspartate 64 is the Proton acceptor of the active site. Glutamate 70 is a binding site for Mg(2+). The ATP site is built by threonine 73 and tryptophan 441.

The protein belongs to the Pup ligase/Pup deamidase family. Pup-conjugating enzyme subfamily.

The enzyme catalyses ATP + [prokaryotic ubiquitin-like protein]-L-glutamate + [protein]-L-lysine = ADP + phosphate + N(6)-([prokaryotic ubiquitin-like protein]-gamma-L-glutamyl)-[protein]-L-lysine.. The protein operates within protein degradation; proteasomal Pup-dependent pathway. It participates in protein modification; protein pupylation. Its function is as follows. Catalyzes the covalent attachment of the prokaryotic ubiquitin-like protein modifier Pup to the proteasomal substrate proteins, thereby targeting them for proteasomal degradation. This tagging system is termed pupylation. The ligation reaction involves the side-chain carboxylate of the C-terminal glutamate of Pup and the side-chain amino group of a substrate lysine. In Corynebacterium kroppenstedtii (strain DSM 44385 / JCM 11950 / CIP 105744 / CCUG 35717), this protein is Pup--protein ligase.